The sequence spans 158 residues: C-type lectin BfL-2 (158 aa).

A signal peptide spans 1–21 (MGHFTFIGLCLLAMFLSLSGA). Cystine bridges form between cysteine 26/cysteine 37, cysteine 54/cysteine 154, cysteine 61/cysteine 156, and cysteine 129/cysteine 146. A C-type lectin domain is found at 33 to 155 (KNGLCYKVFS…CETLHPFICQ (123 aa)). A Mannose-binding motif is present at residues 119–121 (EPN). Asparagine 121 carries an N-linked (GlcNAc...) asparagine glycan. Residues glutamate 127, asparagine 142, and aspartate 143 each coordinate Ca(2+).

This sequence belongs to the true venom lectin family. In terms of assembly, homodimer; non-covalently linked. As to expression, expressed by the venom gland.

It is found in the secreted. In terms of biological role, mannose-binding lectin which recognizes specific carbohydrate structures and agglutinates a variety of animal cells by binding to cell-surface glycoproteins and glycolipids. May be a calcium-dependent lectin. This is C-type lectin BfL-2 from Bungarus fasciatus (Banded krait).